A 356-amino-acid polypeptide reads, in one-letter code: DNA polymerase IV (356 aa).

The UmuC domain maps to 6 to 187 (IIHIDMDYFF…LDIGDFPGVG (182 aa)). Mg(2+) is bound by residues aspartate 10 and aspartate 105. Glutamate 106 is a catalytic residue.

The protein belongs to the DNA polymerase type-Y family. As to quaternary structure, monomer. The cofactor is Mg(2+).

Its subcellular location is the cytoplasm. The catalysed reaction is DNA(n) + a 2'-deoxyribonucleoside 5'-triphosphate = DNA(n+1) + diphosphate. Poorly processive, error-prone DNA polymerase involved in untargeted mutagenesis. Copies undamaged DNA at stalled replication forks, which arise in vivo from mismatched or misaligned primer ends. These misaligned primers can be extended by PolIV. Exhibits no 3'-5' exonuclease (proofreading) activity. May be involved in translesional synthesis, in conjunction with the beta clamp from PolIII. This chain is DNA polymerase IV, found in Staphylococcus aureus (strain JH1).